The following is a 312-amino-acid chain: Glyoxylate/hydroxypyruvate reductase A (312 aa).

Arginine 227 is an active-site residue. Histidine 275 functions as the Proton donor in the catalytic mechanism.

The protein belongs to the D-isomer specific 2-hydroxyacid dehydrogenase family. GhrA subfamily.

The protein resides in the cytoplasm. It carries out the reaction glycolate + NADP(+) = glyoxylate + NADPH + H(+). The enzyme catalyses (R)-glycerate + NAD(+) = 3-hydroxypyruvate + NADH + H(+). The catalysed reaction is (R)-glycerate + NADP(+) = 3-hydroxypyruvate + NADPH + H(+). Its function is as follows. Catalyzes the NADPH-dependent reduction of glyoxylate and hydroxypyruvate into glycolate and glycerate, respectively. In Escherichia coli (strain SMS-3-5 / SECEC), this protein is Glyoxylate/hydroxypyruvate reductase A.